A 259-amino-acid chain; its full sequence is Putative hydro-lyase Rxyl_2409 (259 aa).

Positions 1 to 24 are disordered; it reads MGAPGAAEARERIRRGEHAGPTAG. The segment covering 8 to 18 has biased composition (basic and acidic residues); that stretch reads EARERIRRGEH.

The protein belongs to the D-glutamate cyclase family.

The protein is Putative hydro-lyase Rxyl_2409 of Rubrobacter xylanophilus (strain DSM 9941 / JCM 11954 / NBRC 16129 / PRD-1).